Reading from the N-terminus, the 403-residue chain is tRNA methyltransferase 10 homolog C (403 aa).

The N-terminal 39 residues, 1–39, are a transit peptide targeting the mitochondrion; the sequence is MAAFLKMSVSVNFFRPFTRFLVPFTLHRKRNNLTILQRY. S84 carries the phosphoserine modification. Residues 138–169 adopt a coiled-coil conformation; sequence TKEKVKKARQIKKEMKAAAREEAKNIKLLETT. One can recognise an SAM-dependent MTase TRM10-type domain in the interval 191–383; the sequence is MGWKGAQAMQ…QFVPKRKHTG (193 aa).

The protein belongs to the class IV-like SAM-binding methyltransferase superfamily. TRM10 family. Component of mitochondrial ribonuclease P, a complex composed of TRMT10C/MRPP1, HSD17B10/MRPP2 and PRORP/MRPP3. Interacts with HSD17B10/MRPP2; forming the MRPP1-MRPP2 subcomplex of the mitochondrial ribonuclease P complex. Interacts with GRSF1.

It is found in the mitochondrion matrix. The protein resides in the mitochondrion nucleoid. The catalysed reaction is adenosine(9) in tRNA + S-adenosyl-L-methionine = N(1)-methyladenosine(9) in tRNA + S-adenosyl-L-homocysteine + H(+). It carries out the reaction guanosine(9) in tRNA + S-adenosyl-L-methionine = N(1)-methylguanosine(9) in tRNA + S-adenosyl-L-homocysteine + H(+). It catalyses the reaction an adenosine in mRNA + S-adenosyl-L-methionine = an N(1)-methyladenosine in mRNA + S-adenosyl-L-homocysteine + H(+). Its function is as follows. Mitochondrial tRNA N(1)-methyltransferase involved in mitochondrial tRNA maturation. Component of mitochondrial ribonuclease P, a complex composed of TRMT10C/MRPP1, HSD17B10/MRPP2 and PRORP/MRPP3, which cleaves tRNA molecules in their 5'-ends. Together with HSD17B10/MRPP2, forms a subcomplex of the mitochondrial ribonuclease P, named MRPP1-MRPP2 subcomplex, which displays functions that are independent of the ribonuclease P activity. The MRPP1-MRPP2 subcomplex catalyzes the formation of N(1)-methylguanine and N(1)-methyladenine at position 9 (m1G9 and m1A9, respectively) in tRNAs; TRMT10C/MRPP1 acting as the catalytic N(1)-methyltransferase subunit. The MRPP1-MRPP2 subcomplex also acts as a tRNA maturation platform: following 5'-end cleavage by the mitochondrial ribonuclease P complex, the MRPP1-MRPP2 subcomplex enhances the efficiency of 3'-processing catalyzed by ELAC2, retains the tRNA product after ELAC2 processing and presents the nascent tRNA to the mitochondrial CCA tRNA nucleotidyltransferase TRNT1 enzyme. In addition to tRNA N(1)-methyltransferase activity, TRMT10C/MRPP1 also acts as a mRNA N(1)-methyltransferase by mediating methylation of adenosine residues at the N(1) position of MT-ND5 mRNA. Associates with mitochondrial DNA complexes at the nucleoids to initiate RNA processing and ribosome assembly. The polypeptide is tRNA methyltransferase 10 homolog C (Homo sapiens (Human)).